We begin with the raw amino-acid sequence, 329 residues long: Nuclear pore complex protein NUP35 (329 aa).

Disordered regions lie at residues 48–105 (NFGG…GKGK) and 123–167 (VSGS…PPRE). Residues 123–139 (VSGSPSWWSQSKAGSST) show a composition bias toward polar residues. Residues 183–264 (LDEEEWVTVY…KPVDPIQKQA (82 aa)) form the RRM Nup35-type domain. The interval 271 to 315 (NQGFMPLPPPSSTRNTARPLSRPQYLQNGSAFSPQPSGGAMASPS) is disordered. Residues 282–306 (STRNTARPLSRPQYLQNGSAFSPQP) show a composition bias toward polar residues.

It belongs to the Nup35 family. As to quaternary structure, part of the nuclear pore complex (NPC). The NPC has an eight-fold symmetrical structure comprising a central transport channel and two rings, the cytoplasmic and nuclear rings, to which eight filaments are attached. The cytoplasmic filaments have loose ends, while the nuclear filaments are joined in a distal ring, forming a nuclear basket. NPCs are highly dynamic in configuration and composition, and can be devided in 3 subcomplexes, the NUP62 subcomplex, the NUP107-160 subcomplex and the NUP93 subcomplex, containing approximately 30 different nucleoporin proteins.

The protein resides in the nucleus. Its subcellular location is the nuclear pore complex. The polypeptide is Nuclear pore complex protein NUP35 (Arabidopsis thaliana (Mouse-ear cress)).